The sequence spans 251 residues: HTH-type transcriptional regulator IolR (251 aa).

One can recognise an HTH deoR-type domain in the interval 1–57 (MKLMRIQEMEEYILSHGTVSLDELCQVFNVSKNTVRRDINKLTEKGAIEKVYGGVTS). Residues 19 to 38 (VSLDELCQVFNVSKNTVRRD) constitute a DNA-binding region (H-T-H motif).

Its function is as follows. Iol operon repressor. The chain is HTH-type transcriptional regulator IolR (iolR) from Bacillus subtilis (strain 168).